The sequence spans 96 residues: Small ribosomal subunit protein uS19 (96 aa).

This sequence belongs to the universal ribosomal protein uS19 family.

Its function is as follows. Protein S19 forms a complex with S13 that binds strongly to the 16S ribosomal RNA. In Koribacter versatilis (strain Ellin345), this protein is Small ribosomal subunit protein uS19.